Consider the following 147-residue polypeptide: D-aminoacyl-tRNA deacylase (147 aa).

A Gly-cisPro motif, important for rejection of L-amino acids motif is present at residues 136–137 (GP).

The protein belongs to the DTD family. As to quaternary structure, homodimer.

The protein localises to the cytoplasm. The catalysed reaction is glycyl-tRNA(Ala) + H2O = tRNA(Ala) + glycine + H(+). It catalyses the reaction a D-aminoacyl-tRNA + H2O = a tRNA + a D-alpha-amino acid + H(+). An aminoacyl-tRNA editing enzyme that deacylates mischarged D-aminoacyl-tRNAs. Also deacylates mischarged glycyl-tRNA(Ala), protecting cells against glycine mischarging by AlaRS. Acts via tRNA-based rather than protein-based catalysis; rejects L-amino acids rather than detecting D-amino acids in the active site. By recycling D-aminoacyl-tRNA to D-amino acids and free tRNA molecules, this enzyme counteracts the toxicity associated with the formation of D-aminoacyl-tRNA entities in vivo and helps enforce protein L-homochirality. The protein is D-aminoacyl-tRNA deacylase of Streptococcus equi subsp. zooepidemicus (strain H70).